A 195-amino-acid polypeptide reads, in one-letter code: Holliday junction branch migration complex subunit RuvA (195 aa).

Residues 1 to 64 (MIKGVEGEIT…DRAPEIYGFK (64 aa)) are domain I. The tract at residues 65-137 (DRAEYNVFLM…LYDLVKDYAV (73 aa)) is domain II. The flexible linker stretch occupies residues 137–141 (VEFPK). The segment at 142–195 (ELSDVSEDAVGALTALGFDMTSAKLAVNEVLKEQTVENTQELVRKALRKLNKTR) is domain III.

Belongs to the RuvA family. Homotetramer. Forms an RuvA(8)-RuvB(12)-Holliday junction (HJ) complex. HJ DNA is sandwiched between 2 RuvA tetramers; dsDNA enters through RuvA and exits via RuvB. An RuvB hexamer assembles on each DNA strand where it exits the tetramer. Each RuvB hexamer is contacted by two RuvA subunits (via domain III) on 2 adjacent RuvB subunits; this complex drives branch migration. In the full resolvosome a probable DNA-RuvA(4)-RuvB(12)-RuvC(2) complex forms which resolves the HJ.

It localises to the cytoplasm. Functionally, the RuvA-RuvB-RuvC complex processes Holliday junction (HJ) DNA during genetic recombination and DNA repair, while the RuvA-RuvB complex plays an important role in the rescue of blocked DNA replication forks via replication fork reversal (RFR). RuvA specifically binds to HJ cruciform DNA, conferring on it an open structure. The RuvB hexamer acts as an ATP-dependent pump, pulling dsDNA into and through the RuvAB complex. HJ branch migration allows RuvC to scan DNA until it finds its consensus sequence, where it cleaves and resolves the cruciform DNA. This chain is Holliday junction branch migration complex subunit RuvA, found in Kosmotoga olearia (strain ATCC BAA-1733 / DSM 21960 / TBF 19.5.1).